The sequence spans 311 residues: Probable cell division protein WhiA (311 aa).

The segment at residues 274 to 307 (SLKELGSLLTPPLTKSGVNHRFRKLELIAEKIRN) is a DNA-binding region (H-T-H motif).

This sequence belongs to the WhiA family.

Involved in cell division and chromosome segregation. This is Probable cell division protein WhiA from Carboxydothermus hydrogenoformans (strain ATCC BAA-161 / DSM 6008 / Z-2901).